Consider the following 286-residue polypeptide: Undecaprenyl-diphosphatase (286 aa).

Transmembrane regions (helical) follow at residues 50–70 (PGVS…IAYF), 97–117 (LGIA…AIKL), 127–147 (LRSV…LALA), 165–185 (GLLV…RSGS), 200–220 (AARF…LVEL), 230–250 (GGVL…WLAI), and 262–282 (TWVF…WWAG).

It belongs to the UppP family.

The protein localises to the cell inner membrane. It catalyses the reaction di-trans,octa-cis-undecaprenyl diphosphate + H2O = di-trans,octa-cis-undecaprenyl phosphate + phosphate + H(+). In terms of biological role, catalyzes the dephosphorylation of undecaprenyl diphosphate (UPP). Confers resistance to bacitracin. This is Undecaprenyl-diphosphatase from Synechococcus sp. (strain WH7803).